The primary structure comprises 413 residues: MGAGTLLNGLEKENFPNNIHSDLPAYPNMDSQEDGNTSKESKRNSPVKQKSQKDEEKSSKMGTASNIFHENKDIHERSEHTDDFNDGLKLAPDSSPSLKECQFKNWESFWCNTEGYKTKHMQPFHFTSGLEEIKEPVMELNISTSPYKGQRPNSAPTEYSAATTAFTKTQLEVSFLKTNLLTYIKKEIDICLSSVPFFDDAVQMQKKFLEYRDIDLDEEYELKILGELLNDLNFFHMQENSLLNRELAVRRFSNQPESQNLPSIRDFRNPLLPIDNRPSPPLGLKRNGKSFEETYDFTSNTSNFWGEKAELQNSITGGTPYFFHPNNIHQTKPFMSFENQNELLFQRKNSDYKQHFNSGRNIHNGVESKSYRGVGLNDSYQKGYAAMTKSFGNIDLNRMPRRSNEEMYSWSRN.

Positions 1 to 87 (MGAGTLLNGL…SEHTDDFNDG (87 aa)) are disordered. The segment covering 69-83 (HENKDIHERSEHTDD) has biased composition (basic and acidic residues).

In terms of assembly, interacts with itself. Interacts with MPC54, NUD1 and SPO21/MPC70.

Its subcellular location is the cytoplasm. It is found in the cytoskeleton. The protein resides in the microtubule organizing center. The protein localises to the spindle pole body. Involved in the pathway that organizes the shaping and sizing of the prospore membrane (PSM) during sporulation. Probable component of a core structural unit of the scaffold that initiates synthesis of the prospore membrane. In Saccharomyces cerevisiae (strain ATCC 204508 / S288c) (Baker's yeast), this protein is Sporulation-specific protein 74 (SPO74).